An 83-amino-acid chain; its full sequence is Short neurotoxin NCA-02/NCA-05/UER-05 (83 aa).

The N-terminal stretch at methionine 1–threonine 21 is a signal peptide. 4 cysteine pairs are disulfide-bonded: cysteine 24-cysteine 45, cysteine 38-cysteine 62, cysteine 64-cysteine 75, and cysteine 76-cysteine 81.

This sequence belongs to the three-finger toxin family. Short-chain subfamily. Type I alpha-neurotoxin sub-subfamily. As to expression, expressed by the venom gland.

The protein resides in the secreted. Functionally, binds to muscle nicotinic acetylcholine receptor (nAChR) and inhibit acetylcholine from binding to the receptor, thereby impairing neuromuscular transmission. The polypeptide is Short neurotoxin NCA-02/NCA-05/UER-05 (Laticauda colubrina (Yellow-lipped sea krait)).